Here is a 665-residue protein sequence, read N- to C-terminus: Fructose-1,6-bisphosphatase class 3 (665 aa).

Belongs to the FBPase class 3 family. Mn(2+) serves as cofactor.

It catalyses the reaction beta-D-fructose 1,6-bisphosphate + H2O = beta-D-fructose 6-phosphate + phosphate. Its pathway is carbohydrate biosynthesis; gluconeogenesis. The chain is Fructose-1,6-bisphosphatase class 3 from Clostridium acetobutylicum (strain ATCC 824 / DSM 792 / JCM 1419 / IAM 19013 / LMG 5710 / NBRC 13948 / NRRL B-527 / VKM B-1787 / 2291 / W).